We begin with the raw amino-acid sequence, 666 residues long: MKQYAIQPATLEFNAEGTPVSRDFDDVYFSNDNGLEETRYVFLGGNRLAERFPVHSHPLFIVAESGFGTGLNFLTLWQAFDSFRSAHPQATLQRLHFISFEKFPLTRDDLALAHQHWPELAPWAEQLQAQWPLPLPGCHRLLLDRGRVTLDLWFGDINELTDQLDATLNQTVDAWFLDGFAPAKNPDMWTPNLFNAMARLARPGATLATFTSAGFVRRGLQEAGFTMQKRKGFGRKREMLCGVMEQHRMPTLSAPWFYRSGSEKRETAIIGGGIASALLSLALLRRGWQVTLYCADDQPAQGASGNRQGALYPLLSKHDAAINRFFPTAFTFARRLYDALPVSFDHDWCGVTQLGWDEKSQQKITQMLSLALPAGLASALNAEEAEQAVGVTTRCGGITYPAGSWLCPEQLTRAVIALATEQGLQTRFRHTLTSLVAQESRWQLRFTSGETASHETVVLANGHQINRFDQTQPLPVYAVGGQVSHIPTTPALSALRQVLCYDGYLTPQNPHNQQHCIGASYHRGDESTVWREEDQRQNRQRLLDCFPDAKWATEVDVSGNSARCGVRCATRDHLPMVGNVPDYHATLTHYADLADNKTSAAPAPVYPGLFVLGALGSRGLCSAPLCAEILAAQMSNEPIPLDASTLAALNPNRLWVRKLLKGKAVK.

A tRNA (mnm(5)s(2)U34)-methyltransferase region spans residues 1 to 245 (MKQYAIQPAT…KREMLCGVME (245 aa)). An FAD-dependent cmnm(5)s(2)U34 oxidoreductase region spans residues 270 to 666 (IGGGIASALL…RKLLKGKAVK (397 aa)).

In the N-terminal section; belongs to the methyltransferase superfamily. tRNA (mnm(5)s(2)U34)-methyltransferase family. It in the C-terminal section; belongs to the DAO family. FAD serves as cofactor.

The protein localises to the cytoplasm. The enzyme catalyses 5-aminomethyl-2-thiouridine(34) in tRNA + S-adenosyl-L-methionine = 5-methylaminomethyl-2-thiouridine(34) in tRNA + S-adenosyl-L-homocysteine + H(+). In terms of biological role, catalyzes the last two steps in the biosynthesis of 5-methylaminomethyl-2-thiouridine (mnm(5)s(2)U) at the wobble position (U34) in tRNA. Catalyzes the FAD-dependent demodification of cmnm(5)s(2)U34 to nm(5)s(2)U34, followed by the transfer of a methyl group from S-adenosyl-L-methionine to nm(5)s(2)U34, to form mnm(5)s(2)U34. The polypeptide is tRNA 5-methylaminomethyl-2-thiouridine biosynthesis bifunctional protein MnmC (Salmonella paratyphi A (strain ATCC 9150 / SARB42)).